The sequence spans 1648 residues: Histone transcription regulator 3 (1648 aa).

Disordered regions lie at residues Asn301 to Asn371 and Asp1597 to Arg1630. Thr302 bears the Phosphothreonine mark. Ser304 bears the Phosphoserine mark. The span at Glu339–Ser353 shows a compositional bias: basic and acidic residues. Residues Asp1597–Gly1610 show a composition bias toward polar residues. Residues Ser1611 to Ser1625 are compositionally biased toward low complexity.

Belongs to the HIR3 family. In terms of assembly, component of the HIR complex, composed of HIR1, HIR2, HIR3 and HPC2. This complex may consist of one copy of HIR1 and HIR3 and two copies of HIR2 and HPC2. The HIR complex interacts with ASF1. Interacts with RTT106.

The protein localises to the nucleus. It is found in the chromosome. Its function is as follows. HIR1, HIR2 and HIR3 are repressors of histone gene transcription. They are required for the periodic repression of three of the four histone gene loci during cell cycle as well as for autogenous regulation of the HTA1-HTB1 locus by H2A and H2B. Also has a role in nucleosome assembly. The polypeptide is Histone transcription regulator 3 (HIR3) (Saccharomyces cerevisiae (strain ATCC 204508 / S288c) (Baker's yeast)).